We begin with the raw amino-acid sequence, 43 residues long: METANLVAIFVSCLLVSLTGYALYTSFGRPSEGLIDPFDNHED.

Residues 5 to 27 (NLVAIFVSCLLVSLTGYALYTSF) form a helical membrane-spanning segment.

The protein belongs to the PsbN family.

It localises to the plastid. Its subcellular location is the chloroplast thylakoid membrane. Its function is as follows. May play a role in photosystem I and II biogenesis. This chain is Protein PsbN, found in Ephedra sinica (Chinese ephedra).